The chain runs to 464 residues: L-cystine uptake protein TcyP (464 aa).

The next 10 membrane-spanning stretches (helical) occupy residues 3–23 (TLLV…LYYM), 34–54 (VFTA…IYEP), 73–93 (YVKL…ISAF), 107–127 (GLII…GIAA), 184–204 (PTST…FIGV), 225–245 (IVMR…LALM), 263–283 (FVLA…LLIA), 347–367 (AGIY…IDPL), 371–391 (FILT…GVGG), and 395–415 (FAAL…ALVI).

Belongs to the dicarboxylate/amino acid:cation symporter (DAACS) (TC 2.A.23) family.

It localises to the membrane. In terms of biological role, mediates uptake of L-cystine, the oxidized form of L-cysteine. In Bacillus thuringiensis (strain Al Hakam), this protein is L-cystine uptake protein TcyP.